We begin with the raw amino-acid sequence, 222 residues long: Leucyl/phenylalanyl-tRNA--protein transferase (222 aa).

It belongs to the L/F-transferase family.

Its subcellular location is the cytoplasm. It catalyses the reaction N-terminal L-lysyl-[protein] + L-leucyl-tRNA(Leu) = N-terminal L-leucyl-L-lysyl-[protein] + tRNA(Leu) + H(+). The enzyme catalyses N-terminal L-arginyl-[protein] + L-leucyl-tRNA(Leu) = N-terminal L-leucyl-L-arginyl-[protein] + tRNA(Leu) + H(+). The catalysed reaction is L-phenylalanyl-tRNA(Phe) + an N-terminal L-alpha-aminoacyl-[protein] = an N-terminal L-phenylalanyl-L-alpha-aminoacyl-[protein] + tRNA(Phe). Functions in the N-end rule pathway of protein degradation where it conjugates Leu, Phe and, less efficiently, Met from aminoacyl-tRNAs to the N-termini of proteins containing an N-terminal arginine or lysine. This Legionella pneumophila (strain Corby) protein is Leucyl/phenylalanyl-tRNA--protein transferase.